A 965-amino-acid polypeptide reads, in one-letter code: Isoleucine--tRNA ligase (965 aa).

A 'HIGH' region motif is present at residues P68–H78. E582 contacts L-isoleucyl-5'-AMP. The 'KMSKS' region motif lies at K623 to S627. K626 contributes to the ATP binding site. C936, C939, C956, and C959 together coordinate Zn(2+).

Belongs to the class-I aminoacyl-tRNA synthetase family. IleS type 1 subfamily. Monomer. The cofactor is Zn(2+).

It localises to the cytoplasm. It catalyses the reaction tRNA(Ile) + L-isoleucine + ATP = L-isoleucyl-tRNA(Ile) + AMP + diphosphate. Its function is as follows. Catalyzes the attachment of isoleucine to tRNA(Ile). As IleRS can inadvertently accommodate and process structurally similar amino acids such as valine, to avoid such errors it has two additional distinct tRNA(Ile)-dependent editing activities. One activity is designated as 'pretransfer' editing and involves the hydrolysis of activated Val-AMP. The other activity is designated 'posttransfer' editing and involves deacylation of mischarged Val-tRNA(Ile). This Prochlorococcus marinus (strain MIT 9515) protein is Isoleucine--tRNA ligase.